Here is a 66-residue protein sequence, read N- to C-terminus: Small archaeal modifier protein 2 (66 aa).

Residue K58 forms a Glycyl lysine isopeptide (Lys-Gly) (interchain with G-Cter in SAMP2) linkage. G66 carries the 1-thioglycine; alternate modification. Residue G66 is modified to Glycyl adenylate; alternate. G66 is covalently cross-linked (Glycyl lysine isopeptide (Gly-Lys) (interchain with K-? in acceptor proteins); alternate).

Monomer. Monomeric and polymeric forms interact with NcsA. Post-translationally, the C-terminal glycine is likely acyl-adenylated (-COAMP) by UbaA, and also probably thiocarboxylated (-COSH) to function in sulfur transfer.

Functions as a protein modifier covalently attached to lysine residues of substrate proteins, as well as a sulfur carrier in tRNA thiolation. The protein modification process is termed sampylation and involves the formation of an isopeptide bond between the SAMP2 C-terminal glycine carboxylate and the epsilon-amino group of lysine residues on target proteins. Is able to form polymeric chains with itself at Lys-58, similar to ubiquitin and other ubiquitin-like proteins. May serve as a proteolytic signal in the cell to target proteins for degradation by proteasomes. The protein is Small archaeal modifier protein 2 (samp2) of Haloferax volcanii (strain ATCC 29605 / DSM 3757 / JCM 8879 / NBRC 14742 / NCIMB 2012 / VKM B-1768 / DS2) (Halobacterium volcanii).